Consider the following 346-residue polypeptide: Mitogen-activated protein kinase kinase 1c (346 aa).

The region spanning 70-332 is the Protein kinase domain; the sequence is LELVRFLGKG…TTDLLKHPFL (263 aa). ATP-binding positions include 76–84 and Lys99; that span reads LGKGAGGTV. The active-site Proton acceptor is Asp194.

Belongs to the protein kinase superfamily. STE Ser/Thr protein kinase family. MAP kinase kinase subfamily.

It carries out the reaction L-seryl-[protein] + ATP = O-phospho-L-seryl-[protein] + ADP + H(+). The catalysed reaction is L-threonyl-[protein] + ATP = O-phospho-L-threonyl-[protein] + ADP + H(+). It catalyses the reaction L-tyrosyl-[protein] + ATP = O-phospho-L-tyrosyl-[protein] + ADP + H(+). The CERK1, MEKK1a/b, MKK1a/b/c and MPK4a/b proteins are involved in pathogen defense. The pathway induces rapid growth inhibition, cell wall depositions and accumulation of defense-related transcripts. This protein is required for full defense response to fungal pathogen chitin. The sequence is that of Mitogen-activated protein kinase kinase 1c from Physcomitrium patens (Spreading-leaved earth moss).